A 236-amino-acid polypeptide reads, in one-letter code: GLIPR1-like protein 1 (236 aa).

The N-terminal stretch at 1 to 27 (MALKKKLNFLWTLVLYLIASRLPKAFG) is a signal peptide. In terms of domain architecture, SCP spans 46–178 (LNIHNELRRK…FSAGLFVCNY (133 aa)). Asparagine 126 carries N-linked (GlcNAc...) asparagine glycosylation.

The protein belongs to the CRISP family. As to quaternary structure, part of a oolemmal binding multimeric complex (IZUMO1 complex) composed at least of IZUMO1 and GLIPR1L1; the complex assemblage is influenced by the maturation status of the male germ cell. Interacts with IZUMO1. In terms of processing, N-glycosylated. N-glycosylation decreases during the transit in the caput. Expressed in testis (at protein level). Little or no expression in other tissues tested.

The protein localises to the cytoplasmic vesicle. Its subcellular location is the secretory vesicle. The protein resides in the acrosome. It is found in the cell membrane. It localises to the membrane raft. The protein localises to the secreted. Functionally, required for optimal fertilization at the stage of sperm-oocyte fusion, plays a role in optimizing acrosome function, the translocation of IZUMO1 during the acrosome reaction and the fertilization process. Component of epididymosomes, one type of membranous microvesicules which mediate the transfer of lipids and proteins to spermatozoa plasma membrane during epididymal maturation. Also component of the CD9-positive microvesicules found in the cauda region. The protein is GLIPR1-like protein 1 of Mus musculus (Mouse).